A 225-amino-acid chain; its full sequence is MGRGKVELKRIENKISRQVTFAKRRNGLLKKAYELSVLCDAEVALIIFSTRGRLFEFSTSSCMYKTLERYRSCNYNLNSCEASAALETELSNYQEYLKLKTRVEFLQTTQRNLLGEDLVPLSLKELEQLENQIEISLMNIRSSKNQQLLDQVFELKRKEQQLQDANKDLKRKIQETSGENMLHISCQDVGPSGHASEANQEFLHHAICDPSLHIGYQAYMDHLNQ.

An MADS-box domain is found at Met-1–Ser-61. The region spanning Glu-89–Glu-179 is the K-box domain.

As to quaternary structure, may interact with the K-box of MADS6.

The protein localises to the nucleus. In terms of biological role, probable transcription factor. This chain is MADS-box transcription factor 5 (MADS5), found in Oryza sativa subsp. indica (Rice).